Consider the following 653-residue polypeptide: Sodium-dependent phosphate transporter 2 (653 aa).

Over 1–5 (MAIDG) the chain is Extracellular. A helical membrane pass occupies residues 6-26 (YLWMVILGFIIAFILAFSVGA). Topologically, residues 27 to 46 (NDVANSFGTAVGSGVVTLRQ) are cytoplasmic. The chain crosses the membrane as a helical span at residues 47-67 (ACILASIFETTGSVLLGAKVG). Over 68-86 (ETIRKGIIDVNLYNETVET) the chain is Extracellular. A glycan (N-linked (GlcNAc...) asparagine) is linked at Asn-81. The helical transmembrane segment at 87 to 107 (LMAGEVSAMVGSAVWQLIASF) threads the bilayer. The Cytoplasmic segment spans residues 108 to 109 (LR). The helical transmembrane segment at 110–130 (LPISGTHCIVGSTIGFSLVAI) threads the bilayer. Residues 131–142 (GTQGVQWMELVK) lie on the Extracellular side of the membrane. A helical membrane pass occupies residues 143-163 (IVASWFISPLLSGFMSGVLFI). Residues 164–190 (LIRIFILKKEDPVPNGLRALPVFYAAT) lie on the Cytoplasmic side of the membrane. Residues 191 to 211 (IAINVFSIMYTGAPVLGLVLP) traverse the membrane as a helical segment. Topologically, residues 212 to 213 (IW) are extracellular. Residues 214–234 (AIALISFGVALLFALFVWLFV) traverse the membrane as a helical segment. At 235–483 (CPWMRRKIAG…EEKEEKDTAE (249 aa)) the chain is on the cytoplasmic side. Residues Ser-253, Ser-256, Ser-259, and Ser-268 each carry the phosphoserine modification. A disordered region spans residues 275–311 (PGAKANDDSTVPLTGSAGEPSGTSEGTSVGNHPRASY). A compositionally biased stretch (polar residues) spans 295-304 (SGTSEGTSVG). Ser-316 and Ser-385 each carry phosphoserine. The tract at residues 459–478 (SELTDPDQPRDDPAEEEKEE) is disordered. Residues 484–504 (VHLLFHFLQVLTACFGSFAHG) form a helical membrane-spanning segment. Over 505-531 (GNDVSNAIGPLVALWLIYEQGAVLQEA) the chain is Extracellular. A helical transmembrane segment spans residues 532-552 (VTPVWLLFYGGVGICTGLWVW). Residues 553–572 (GRRVIQTMGKDLTPITPSSG) lie on the Cytoplasmic side of the membrane. A helical membrane pass occupies residues 573–587 (FTIELASAFTVVIAS). The Extracellular portion of the chain corresponds to 588 to 594 (NVGLPVS). A helical membrane pass occupies residues 595–610 (TTHCKVGSVVAVGWIR). Residues 611–622 (SRKAVDWRLFRN) lie on the Cytoplasmic side of the membrane. A helical membrane pass occupies residues 623-643 (IFVAWFVTVPVAGLFSAAIMA). The Extracellular portion of the chain corresponds to 644-653 (LLMYGILPYV).

The protein belongs to the inorganic phosphate transporter (PiT) (TC 2.A.20) family. Homodimer.

It localises to the cell membrane. The protein resides in the apical cell membrane. The catalysed reaction is 2 Na(+)(out) + phosphate(out) = 2 Na(+)(in) + phosphate(in). Its function is as follows. Sodium-phosphate symporter which preferentially transports the monovalent form of phosphate with a stoichiometry of two sodium ions per phosphate ion. Plays a critical role in the determination of bone quality and strength by providing phosphate for bone mineralization. Required to maintain normal cerebrospinal fluid phosphate levels. Mediates phosphate-induced calcification of vascular smooth muscle cells (VCMCs) and can functionally compensate for loss of SLC20A1 in VCMCs. In terms of biological role, (Microbial infection) Functions as a retroviral receptor for feline leukemia virus subgroup B (FeLV-B). This Felis catus (Cat) protein is Sodium-dependent phosphate transporter 2 (SLC20A2).